Here is a 435-residue protein sequence, read N- to C-terminus: Acetylcholine receptor-like protein cup-4 (435 aa).

The signal sequence occupies residues 1–24; it reads MRLLLIFTVIFVFYLAILKRDVNA. Residues Asn41, Asn68, Asn237, and Asn249 are each glycosylated (N-linked (GlcNAc...) asparagine). The next 2 helical transmembrane spans lie at 298 to 318 and 341 to 361; these read VSFF…AIYL and ITLF…HGVL. An N-linked (GlcNAc...) asparagine glycan is attached at Asn403. The helical transmembrane segment at 413–433 threads the bilayer; sequence PLAGLAMFVYFVIMFILYLVV.

This sequence belongs to the ligand-gated ion channel (TC 1.A.9) family. Acetylcholine receptor (TC 1.A.9.1) subfamily.

The protein localises to the cytoplasmic vesicle membrane. Thought to regulate endocytosis in coelomocytes through modulation of phospholipase C activity. Possible acetylcholine receptor. The polypeptide is Acetylcholine receptor-like protein cup-4 (Caenorhabditis briggsae).